Here is a 123-residue protein sequence, read N- to C-terminus: Sterol carrier protein 2 (123 aa).

An SCP2 domain is found at 16-113 (KEHLSTDAGK…GSLSAAQKFT (98 aa)). The short motif at 121-123 (SKL) is the Microbody targeting signal element.

In terms of tissue distribution, expressed in most tissues including seedlings, cotyledons, inflorescence, leaves, stems, roots, siliques and flower buds, with the highest levels in floral tissues and in maturing seeds.

Its subcellular location is the peroxisome. In terms of biological role, enhances the transfer of lipids between membranes in vitro. Active on phosphatidylcholine (PC), 1-palmitoyl 2-oleoyl phosphatidylcholine (POPC) and ergosterol, and, to a lower extent, dimyristoyl phosphatidic acid, stigmasterol, desmosterol, beta-sitosterol and steryl glucoside. Inactive or poorly active on palmitic acid, stearoyl-coenzyme A, cholesterol, glucosylceramide and ceramide. Required during seeds and seedlings development. This Arabidopsis thaliana (Mouse-ear cress) protein is Sterol carrier protein 2.